Here is a 427-residue protein sequence, read N- to C-terminus: A-adding tRNA nucleotidyltransferase (427 aa).

ATP is bound at residue 49–52; sequence GTVR. Mg(2+) is bound by residues D62 and D64. ATP contacts are provided by residues 136–137, N141, 181–190, R194, and R225; these read RD and DPTRLLRGVR.

Belongs to the tRNA nucleotidyltransferase/poly(A) polymerase family. Requires Mg(2+) as cofactor.

It carries out the reaction a tRNA with a 3' CC end + ATP = a tRNA with a 3' CCA end + diphosphate. Its function is as follows. tRNA nucleotidyltransferase involved in the synthesis of the tRNA CCA terminus. Adds the terminal adenosine residue to tRNA. This chain is A-adding tRNA nucleotidyltransferase, found in Halalkalibacterium halodurans (strain ATCC BAA-125 / DSM 18197 / FERM 7344 / JCM 9153 / C-125) (Bacillus halodurans).